We begin with the raw amino-acid sequence, 274 residues long: GCN5-related N-acetyltransferase 7, chloroplastic (274 aa).

The transit peptide at 1 to 65 (MAFLCSSLPS…STFVISESVS (65 aa)) directs the protein to the chloroplast. One can recognise an N-acetyltransferase domain in the interval 75–267 (LRVRTFNELN…QRLLLWLALP (193 aa)). Acetyl-CoA-binding positions include 189–191 (VCV), 197–202 (RNGVGY), 228–230 (NEA), and Y235. The active-site Proton donor is the Y235.

Belongs to the acetyltransferase family. GNAT subfamily. Oligomer. In terms of processing, autoacetylated. In terms of tissue distribution, expressed in green tissues.

The protein resides in the plastid. The protein localises to the chloroplast. It catalyses the reaction an N-terminal L-alpha-aminoacyl-[protein] + acetyl-CoA = N-terminal N(alpha)-acetyl-L-alpha-aminoacyl-[protein] + CoA + H(+). It carries out the reaction L-lysyl-[protein] + acetyl-CoA = N(6)-acetyl-L-lysyl-[protein] + CoA + H(+). The enzyme catalyses N-terminal L-alanyl-[protein] + acetyl-CoA = N-terminal N(alpha)-acetyl-L-alanyl-[protein] + CoA + H(+). The catalysed reaction is N-terminal L-seryl-[protein] + acetyl-CoA = N-terminal N(alpha)-acetyl-L-seryl-[protein] + CoA + H(+). It catalyses the reaction N-terminal L-threonyl-[protein] + acetyl-CoA = N-terminal N(alpha)-acetyl-L-threonyl-[protein] + CoA + H(+). It carries out the reaction N-terminal L-methionyl-[protein] + acetyl-CoA = N-terminal N(alpha)-acetyl-L-methionyl-[protein] + CoA + H(+). The enzyme catalyses N-terminal L-prolyl-[protein] + acetyl-CoA = N-terminal N(alpha)-acetyl-L-prolyl-[protein] + CoA + H(+). The catalysed reaction is N-terminal L-valyl-[protein] + acetyl-CoA = N-terminal N(alpha)-acetyl-L-valyl-[protein] + CoA + H(+). In terms of biological role, protein acetyltransferase with dual specificity triggering both N-alpha-acetylation (NTA), with a large spectrum of modified N-termini, including methionine, alanine, serine, threonine and to a lower extent valine and proline as substrates, and epsilon-lysine acetylation (KA). The sequence is that of GCN5-related N-acetyltransferase 7, chloroplastic from Arabidopsis thaliana (Mouse-ear cress).